Here is a 119-residue protein sequence, read N- to C-terminus: Large ribosomal subunit protein bL20 (119 aa).

It belongs to the bacterial ribosomal protein bL20 family.

Its function is as follows. Binds directly to 23S ribosomal RNA and is necessary for the in vitro assembly process of the 50S ribosomal subunit. It is not involved in the protein synthesizing functions of that subunit. The polypeptide is Large ribosomal subunit protein bL20 (Chloroflexus aggregans (strain MD-66 / DSM 9485)).